A 1215-amino-acid polypeptide reads, in one-letter code: Metabotropic glycine receptor (1215 aa).

The first 23 residues, 1–23 (MGAMAYPLLLCLLLAQLGLGAVG), serve as a signal peptide directing secretion. Positions 23–66 (GASRDPQGRPDSPRERTPKGKPHAQQPGRASASDSSAPWSRSTD) are disordered. The Extracellular portion of the chain corresponds to 24–417 (ASRDPQGRPD…CFVQEDKYLR (394 aa)). The span at 28–40 (PQGRPDSPRERTP) shows a compositional bias: basic and acidic residues. The span at 52 to 64 (ASASDSSAPWSRS) shows a compositional bias: low complexity. The tract at residues 85-281 (YLYTGDSHQL…CENGSYKPGW (197 aa)) is cache-like region. N-linked (GlcNAc...) asparagine glycosylation is found at N98 and N143. C99 and C272 form a disulfide bridge. Glycine is bound by residues S172 and R173. An N-linked (GlcNAc...) asparagine glycan is attached at N215. E271 contributes to the glycine binding site. An N-linked (GlcNAc...) asparagine glycan is attached at N274. D307 contacts glycine. Residue N333 is glycosylated (N-linked (GlcNAc...) asparagine). A helical transmembrane segment spans residues 418–439 (LAIISFQALCMLLDFVSMLVVY). Topologically, residues 440 to 451 (HFRKAKSIRASG) are cytoplasmic. Residues 452–474 (LILLETILFGSLLLYFPVVILYF) traverse the membrane as a helical segment. The Extracellular segment spans residues 475–478 (EPST). Residues 479–501 (FRCILLRWARLLGFATVYGTVTL) traverse the membrane as a helical segment. C481 and C573 are joined by a disulfide. Residues 502 to 525 (KLHRVLKVFLSRTAQRIPYMTGGR) lie on the Cytoplasmic side of the membrane. A helical membrane pass occupies residues 526 to 547 (VMRMLAVILLVVFWFLIGWTSS). The Extracellular segment spans residues 548 to 576 (VCQNLEKQISLIGQGKTSDHLIFNMCLID). A helical transmembrane segment spans residues 577–597 (RWDYMTAVAEFLFLLWGVYLC). Residues 598–611 (YAVRTVPSAFHEPR) lie on the Cytoplasmic side of the membrane. Residues 612-633 (YMAVAVHNELIISAIFHTIRFV) traverse the membrane as a helical segment. The Extracellular segment spans residues 634–642 (LASRLQSDW). Residues 643-664 (MLMLYFAHTHLTVTVTIGLLLI) form a helical membrane-spanning segment. Residues 665-1215 (PKFSHSSNNP…KEEIWDSFKV (551 aa)) are Cytoplasmic-facing. Residues S694, S705, and S708 each carry the phosphoserine modification. The interval 757–999 (RITEIPETVS…LNPGTTQMKD (243 aa)) is disordered. Basic and acidic residues-rich tracts occupy residues 769 to 781 (CSKE…DHGT) and 819 to 828 (STYDHVRDQT). K774 is covalently cross-linked (Glycyl lysine isopeptide (Lys-Gly) (interchain with G-Cter in ubiquitin)). Residue S865 is modified to Phosphoserine. A compositionally biased stretch (basic and acidic residues) spans 925-943 (VEERTKSQKPLPKDKETNR). Residue S946 is modified to Phosphoserine. A compositionally biased stretch (polar residues) spans 979–998 (QRVNPTTANSDLNPGTTQMK). 2 consecutive short sequence motifs (VCPWE motif) follow at residues 1006–1010 (VCPWE) and 1071–1075 (VCLWE). At S1080 the chain carries Phosphoserine. A disordered region spans residues 1117–1164 (SEELPPKAVASKTENENLNQIGHQEKKTSSSEENVRGSYNSSNNFQQP). The segment covering 1139–1151 (HQEKKTSSSEENV) has biased composition (basic and acidic residues). Positions 1153-1164 (GSYNSSNNFQQP) are enriched in polar residues. The VCPWE motif 3 motif lies at 1171-1175 (VCPWE).

This sequence belongs to the G-protein coupled receptor 3 family. In terms of assembly, homodimer. Associates with the RGS7-GNB5 complex, promoting its localization to the cell membrane and regulating its GTPase activator activity. Interacts (via VCPWE motifs) with GNAO1. Interacts with GPC4. Interacts with EGFLAM.

The protein localises to the cell membrane. The protein resides in the postsynaptic cell membrane. Its subcellular location is the presynaptic cell membrane. It is found in the nucleus. Metabotropic receptor for glycine that controls synapse formation and function in the brain. Acts as an atypical G-protein coupled receptor that recruits and regulates the RGS7-GNB5 complex instead of activating G proteins. In absence of glycine ligand, promotes the GTPase activator activity of RGS7, increasing the GTPase activity of G protein alpha subunits, thereby driving them into their inactive GDP-bound form. Glycine-binding changes the conformation of the intracellular surface, inhibiting the GTPase activator activity of the RGS7-GNB5 complex, promoting G protein alpha subunits into their active GTP-bound form and regulating cAMP levels. Also able to bind taurine, a compound closely related to glycine, but with a two-fold lower affinity. Glycine receptor-dependent regulation of cAMP controls key ion channels, kinases and neurotrophic factors involved in neuronal excitability and synaptic transmission. Plays a pivotal role in regulating mood and cognition via its ability to regulate neuronal excitability in L2/L3 pyramidal neurons of the prefrontal cortex. Also involved in spatial learning by regulating hippocampal CA1 neuronal excitability. Acts as a synaptic organizer in the hippocampus, required for proper mossy fiber-CA3 neurocircuitry establishment, structure and function: induces presynaptic differentiation in contacting axons via its interaction with GPC4. In addition to glycine, may also act as a receptor for osteocalcin (BGLAP) hormone: osteocalcin-binding initiates a signaling response that prevents neuronal apoptosis in the hippocampus and regulates the synthesis of neurotransmitters. The chain is Metabotropic glycine receptor from Homo sapiens (Human).